The chain runs to 116 residues: Large ribosomal subunit protein bL19 (116 aa).

It belongs to the bacterial ribosomal protein bL19 family.

This protein is located at the 30S-50S ribosomal subunit interface and may play a role in the structure and function of the aminoacyl-tRNA binding site. The chain is Large ribosomal subunit protein bL19 from Nocardioides sp. (strain ATCC BAA-499 / JS614).